Here is a 91-residue protein sequence, read N- to C-terminus: Small ribosomal subunit protein bS16 (91 aa).

The protein belongs to the bacterial ribosomal protein bS16 family.

In Staphylococcus aureus (strain Mu3 / ATCC 700698), this protein is Small ribosomal subunit protein bS16.